We begin with the raw amino-acid sequence, 404 residues long: Chorismate synthase (404 aa).

The NADP(+) site is built by arginine 43 and arginine 49. FMN contacts are provided by residues 138 to 140 (RAS), 259 to 260 (QA), glycine 303, 318 to 322 (KPIST), and arginine 344.

This sequence belongs to the chorismate synthase family. Homotetramer. It depends on FMNH2 as a cofactor.

It catalyses the reaction 5-O-(1-carboxyvinyl)-3-phosphoshikimate = chorismate + phosphate. Its pathway is metabolic intermediate biosynthesis; chorismate biosynthesis; chorismate from D-erythrose 4-phosphate and phosphoenolpyruvate: step 7/7. Its function is as follows. Catalyzes the anti-1,4-elimination of the C-3 phosphate and the C-6 proR hydrogen from 5-enolpyruvylshikimate-3-phosphate (EPSP) to yield chorismate, which is the branch point compound that serves as the starting substrate for the three terminal pathways of aromatic amino acid biosynthesis. This reaction introduces a second double bond into the aromatic ring system. This chain is Chorismate synthase, found in Mycolicibacterium paratuberculosis (strain ATCC BAA-968 / K-10) (Mycobacterium paratuberculosis).